A 591-amino-acid polypeptide reads, in one-letter code: Thiamine transporter thi9 (591 aa).

Positions 1–22 (MPSSQISHQDPELGQTSSGSSS) are enriched in polar residues. The interval 1–42 (MPSSQISHQDPELGQTSSGSSSIKEKAEPQLYAGPIDPARRP) is disordered. 5 consecutive transmembrane segments (helical) span residues 98-118 (LTFSWGISFGGPAAYWSAMLV), 342-362 (IFYSTVTSFIVAFSLAILYLF), 397-417 (VVMNVVIILEIFLNGVVSVLA), 450-470 (ITVIYIVSALLLCTILPSAVA), and 545-565 (YAVVIMGGVSIFAIICTIVIP). Residue serine 585 is modified to Phosphoserine.

Belongs to the amino acid-polyamine-organocation (APC) superfamily.

It localises to the endoplasmic reticulum membrane. The protein resides in the cell membrane. Its function is as follows. Thiamine transporter involved in the cellular uptake of thiamine. Pyrithiamine, oxythiamine, amprolium, and the thiazole part of thiamine have been shown to be also substrates of thi9. This chain is Thiamine transporter thi9 (thi9), found in Schizosaccharomyces pombe (strain 972 / ATCC 24843) (Fission yeast).